We begin with the raw amino-acid sequence, 524 residues long: 5'-AMP-activated protein kinase subunit gamma-2 (524 aa).

Positions 1–178 are disordered; that stretch reads MPLLDGDLEG…TRPPLASPTH (178 aa). Phosphoserine occurs at positions 21, 27, 29, 46, 94, 99, 117, and 118. Positions 112 to 123 are enriched in low complexity; that stretch reads TSGLSSSPSTPT. T121 is modified (phosphothreonine). Residues 135 to 145 are compositionally biased toward basic and acidic residues; sequence SYKHEPERLEN. Residues 148-168 are compositionally biased toward polar residues; the sequence is YASSSPPDTGQRFCPSSFQSP. Phosphoserine is present on S152. 3 consecutive CBS domains span residues 230–290, 312–370, and 385–447; these read PTSS…KSPM, TFKP…MSDM, and IGTY…NLDI. Residues R257, 272–277, V317, 338–339, and K357 contribute to the ADP site; these read MLTITD and HR. AMP is bound by residues R257, 272–277, V317, H338, 338–339, K357, T387, A392, 413–414, 429–432, R456, H485, 485–486, and 501–504; these read MLTITD, HR, SA, SKFD, and SLSD. Residues R257, 272–277, V317, 338–339, R339, and K357 contribute to the ATP site; these read MLTITD and HR. Positions 325-346 match the AMPK pseudosubstrate motif; sequence LLDAVYSLIKNKIHRLPVIDPI. ADP-binding positions include 429-432, R456, and 485-486; these read SKFD and HR. ATP is bound by residues 429-432, R456, and 485-486; these read SKFD and HR. The region spanning 459–517 is the CBS 4 domain; it reads YFEGVVKCNKLEILETIVDRIVRAEVHRLVVANEADSIVGIISLSDILQALILTPAGAK.

Belongs to the 5'-AMP-activated protein kinase gamma subunit family. In terms of assembly, AMPK is a heterotrimer of an alpha catalytic subunit (PRKAA1 or PRKAA2), a beta (PRKAB1 or PRKAB2) and a gamma non-catalytic subunits (PRKAG1, PRKAG2 or PRKAG3). Interacts with FNIP1 and FNIP2. Post-translationally, phosphorylated by ULK1; leading to negatively regulate AMPK activity and suggesting the existence of a regulatory feedback loop between ULK1 and AMPK. In terms of processing, glycosylated; O-GlcNAcylated by OGT, promoting the AMP-activated protein kinase (AMPK) activity.

Its function is as follows. AMP/ATP-binding subunit of AMP-activated protein kinase (AMPK), an energy sensor protein kinase that plays a key role in regulating cellular energy metabolism. In response to reduction of intracellular ATP levels, AMPK activates energy-producing pathways and inhibits energy-consuming processes: inhibits protein, carbohydrate and lipid biosynthesis, as well as cell growth and proliferation. AMPK acts via direct phosphorylation of metabolic enzymes, and by longer-term effects via phosphorylation of transcription regulators. Also acts as a regulator of cellular polarity by remodeling the actin cytoskeleton; probably by indirectly activating myosin. Gamma non-catalytic subunit mediates binding to AMP, ADP and ATP, leading to activate or inhibit AMPK: AMP-binding results in allosteric activation of alpha catalytic subunit (PRKAA1 or PRKAA2) both by inducing phosphorylation and preventing dephosphorylation of catalytic subunits. ADP also stimulates phosphorylation, without stimulating already phosphorylated catalytic subunit. ATP promotes dephosphorylation of catalytic subunit, rendering the AMPK enzyme inactive. In Pongo abelii (Sumatran orangutan), this protein is 5'-AMP-activated protein kinase subunit gamma-2 (PRKAG2).